An 89-amino-acid chain; its full sequence is Defensin-like protein 108 (89 aa).

The first 20 residues, 1–20 (MTSLIAFLFTVLVIVSSVHC), serve as a signal peptide directing secretion. Cystine bridges form between Cys-39–Cys-81, Cys-49–Cys-71, Cys-57–Cys-79, and Cys-61–Cys-80.

The protein belongs to the DEFL family.

The protein resides in the secreted. The protein is Defensin-like protein 108 (LCR51) of Arabidopsis thaliana (Mouse-ear cress).